Consider the following 88-residue polypeptide: UPF0147 protein Ta0600 (88 aa).

This sequence belongs to the UPF0147 family.

The protein is UPF0147 protein Ta0600 of Thermoplasma acidophilum (strain ATCC 25905 / DSM 1728 / JCM 9062 / NBRC 15155 / AMRC-C165).